The sequence spans 865 residues: Protein translocase subunit SecA (865 aa).

Residues Gln-85, 103 to 107 (GEGKT), and Asp-505 each bind ATP. Zn(2+) is bound by residues Cys-847, Cys-849, Cys-858, and His-859.

It belongs to the SecA family. In terms of assembly, monomer and homodimer. Part of the essential Sec protein translocation apparatus which comprises SecA, SecYEG and auxiliary proteins SecDF. Other proteins may also be involved. Zn(2+) is required as a cofactor.

Its subcellular location is the cell membrane. The protein localises to the cytoplasm. It carries out the reaction ATP + H2O + cellular proteinSide 1 = ADP + phosphate + cellular proteinSide 2.. Its function is as follows. Part of the Sec protein translocase complex. Interacts with the SecYEG preprotein conducting channel. Has a central role in coupling the hydrolysis of ATP to the transfer of proteins into and across the cell membrane, serving as an ATP-driven molecular motor driving the stepwise translocation of polypeptide chains across the membrane. The sequence is that of Protein translocase subunit SecA from Lactococcus lactis subsp. lactis (strain IL1403) (Streptococcus lactis).